A 430-amino-acid chain; its full sequence is Tol-Pal system protein TolB (430 aa).

A signal peptide spans 1–21 (MKQAFRVALGFFLLWASVLHA).

It belongs to the TolB family. In terms of assembly, the Tol-Pal system is composed of five core proteins: the inner membrane proteins TolA, TolQ and TolR, the periplasmic protein TolB and the outer membrane protein Pal. They form a network linking the inner and outer membranes and the peptidoglycan layer.

The protein resides in the periplasm. Its function is as follows. Part of the Tol-Pal system, which plays a role in outer membrane invagination during cell division and is important for maintaining outer membrane integrity. TolB occupies a key intermediary position in the Tol-Pal system because it communicates directly with both membrane-embedded components, Pal in the outer membrane and TolA in the inner membrane. In Sodalis glossinidius (strain morsitans), this protein is Tol-Pal system protein TolB.